Consider the following 306-residue polypeptide: uncharacterized protein (306 aa).

The next 10 helical transmembrane spans lie at 6–26 (LLGF…PIAL), 35–55 (AQTI…ALLA), 69–89 (YAWI…LFSS), 98–118 (VAQI…VLIF), 122–142 (LGLH…LFFN), 154–174 (YSTG…YGMA), 186–206 (QILL…ADFS), 211–231 (LTPL…IGYG), 247–267 (VVIT…HYFS), and 281–301 (YIGA…HKLL). 2 EamA domains span residues 17–142 (MAWG…LFFN) and 166–296 (LIWV…LSAI).

It belongs to the EamA transporter family.

It localises to the cell membrane. This is an uncharacterized protein from Haemophilus influenzae (strain ATCC 51907 / DSM 11121 / KW20 / Rd).